The following is a 173-amino-acid chain: MAEIIEKSGLRWLWLAAIMLALDQVTKYWTIQSLDLYESYEIFSFFSFTYARNYGAAFSFLGDAGGWQRYLFTAIAIVVSSYLVYLLKKNASTDRWINCAYALILSGALGNVVDRMMFGYVIDFLDFDLGFYRWPTFNIADSAIFTGAVIMIFESFFAKQAKPIKQPKGNKNV.

3 helical membrane passes run 12 to 32 (WLWLAAIMLALDQVTKYWTIQ), 67 to 87 (WQRYLFTAIAIVVSSYLVYLL), and 102 to 122 (ALILSGALGNVVDRMMFGYVI). Catalysis depends on residues D123 and D141. The chain crosses the membrane as a helical span at residues 137-157 (FNIADSAIFTGAVIMIFESFF).

It belongs to the peptidase A8 family.

It localises to the cell inner membrane. It catalyses the reaction Release of signal peptides from bacterial membrane prolipoproteins. Hydrolyzes -Xaa-Yaa-Zaa-|-(S,diacylglyceryl)Cys-, in which Xaa is hydrophobic (preferably Leu), and Yaa (Ala or Ser) and Zaa (Gly or Ala) have small, neutral side chains.. Its pathway is protein modification; lipoprotein biosynthesis (signal peptide cleavage). Its function is as follows. This protein specifically catalyzes the removal of signal peptides from prolipoproteins. In Psychromonas ingrahamii (strain DSM 17664 / CCUG 51855 / 37), this protein is Lipoprotein signal peptidase.